Reading from the N-terminus, the 502-residue chain is ATP synthase subunit alpha (502 aa).

169–176 contributes to the ATP binding site; the sequence is GDRQTGKT.

It belongs to the ATPase alpha/beta chains family. In terms of assembly, F-type ATPases have 2 components, CF(1) - the catalytic core - and CF(0) - the membrane proton channel. CF(1) has five subunits: alpha(3), beta(3), gamma(1), delta(1), epsilon(1). CF(0) has three main subunits: a(1), b(2) and c(9-12). The alpha and beta chains form an alternating ring which encloses part of the gamma chain. CF(1) is attached to CF(0) by a central stalk formed by the gamma and epsilon chains, while a peripheral stalk is formed by the delta and b chains.

The protein localises to the cell inner membrane. It catalyses the reaction ATP + H2O + 4 H(+)(in) = ADP + phosphate + 5 H(+)(out). Its function is as follows. Produces ATP from ADP in the presence of a proton gradient across the membrane. The alpha chain is a regulatory subunit. The polypeptide is ATP synthase subunit alpha (Nitratidesulfovibrio vulgaris (strain ATCC 29579 / DSM 644 / CCUG 34227 / NCIMB 8303 / VKM B-1760 / Hildenborough) (Desulfovibrio vulgaris)).